A 105-amino-acid polypeptide reads, in one-letter code: Thioredoxin (105 aa).

The 102-residue stretch at 2-103 folds into the Thioredoxin domain; that stretch reads VKQIESKSAF…KEKLEATIKG (102 aa). Position 3 is an N6-acetyllysine (Lys-3). Position 8 is an N6-succinyllysine (Lys-8). Catalysis depends on nucleophile residues Cys-32 and Cys-35. A disulfide bridge links Cys-32 with Cys-35. Position 39 is an N6-acetyllysine (Lys-39). 2 positions are modified to S-nitrosocysteine: Cys-62 and Cys-69. Position 73 is an S-nitrosocysteine; alternate (Cys-73). An N6-acetyllysine; alternate modification is found at Lys-94. Lys-94 carries the post-translational modification N6-succinyllysine; alternate.

Belongs to the thioredoxin family. Homodimer; disulfide-linked. Interacts with TXNIP through the redox-active site. Interacts with MAP3K5 and CASP3. Interacts with APEX1; the interaction stimulates the FOS/JUN AP-1 DNA-binding activity in a redox-dependent manner. In the fully reduced protein, both Cys-69 and Cys-73 are nitrosylated in response to nitric oxide (NO). When two disulfide bonds are present in the protein, only Cys-73 is nitrosylated. Cys-73 can serve as donor for nitrosylation of target proteins.

The protein resides in the nucleus. The protein localises to the cytoplasm. Its subcellular location is the secreted. Its function is as follows. Participates in various redox reactions through the reversible oxidation of its active center dithiol to a disulfide and catalyzes dithiol-disulfide exchange reactions. Plays a role in the reversible S-nitrosylation of cysteine residues in target proteins, and thereby contributes to the response to intracellular nitric oxide. Nitrosylates the active site Cys of CASP3 in response to nitric oxide (NO), and thereby inhibits caspase-3 activity. Induces the FOS/JUN AP-1 DNA binding activity in ionizing radiation (IR) cells through its oxidation/reduction status and stimulates AP-1 transcriptional activity. In Equus caballus (Horse), this protein is Thioredoxin (TXN).